We begin with the raw amino-acid sequence, 388 residues long: MASTAVGLGGGEGDPGAGGPPAGSAHPDDASSMSDDVFEDAETTQARIEELRRRPFGDGSYNPPAAPASVSASITTTTTQQQQQHHNPSHHHQSSHHQPSHHHHHHHHSQLSLTGSHHYHDDAIMAPVQRSATGYPGYRPSREAMQMYAYGTDDYDDDYNDGWRSYRYDEVDMHPAPSNAHQQPFDDTVNHKTILLGDSGVGKTSFLVKYNTGEFRLGSFSATVGIALTNKVVVVDGTRVKLQIWDTAGQERFRSVTHAYYRDAHALLLLYDVTNKTTYDNIRAWLGEIREYAQEDVVIVLIGNKADCSGSERQVKREDGERLGREHNVPFMETSAKTGLNVELSFTAVARQLKSRGYEHGDDGKFNVHDFVRDNTKARSVCAQCRNM.

The disordered stretch occupies residues 1 to 115 (MASTAVGLGG…HHHSQLSLTG (115 aa)). The segment covering 7–21 (GLGGGEGDPGAGGPP) has biased composition (gly residues). Over residues 47 to 56 (RIEELRRRPF) the composition is skewed to basic and acidic residues. Residues 67 to 86 (PASVSASITTTTTQQQQQHH) are compositionally biased toward low complexity. A compositionally biased stretch (basic residues) spans 87–109 (NPSHHHQSSHHQPSHHHHHHHHS). 197-204 (GDSGVGKT) provides a ligand contact to GTP. An Effector region motif is present at residues 219 to 228 (SFSATVGIAL). Residues 246–250 (DTAGQ) and 304–307 (NKAD) each bind GTP. Cys-382 is lipidated: S-palmitoyl cysteine. Cys-385 carries the post-translational modification Cysteine methyl ester. Residue Cys-385 is the site of S-geranylgeranyl cysteine attachment. Positions 386–388 (RNM) are cleaved as a propeptide — removed in mature form.

The protein belongs to the small GTPase superfamily. Rab family.

Its subcellular location is the cell membrane. Participates in exocrine secretion. The polypeptide is Ras-related protein Rab-26 (Drosophila melanogaster (Fruit fly)).